An 80-amino-acid polypeptide reads, in one-letter code: UPF0180 protein BPUM_1317 (80 aa).

This sequence belongs to the UPF0180 family.

The protein is UPF0180 protein BPUM_1317 of Bacillus pumilus (strain SAFR-032).